The following is a 228-amino-acid chain: Large ribosomal subunit protein uL3 (228 aa).

This sequence belongs to the universal ribosomal protein uL3 family. Part of the 50S ribosomal subunit. Forms a cluster with proteins L14 and L19.

Its function is as follows. One of the primary rRNA binding proteins, it binds directly near the 3'-end of the 23S rRNA, where it nucleates assembly of the 50S subunit. This is Large ribosomal subunit protein uL3 from Leuconostoc mesenteroides subsp. mesenteroides (strain ATCC 8293 / DSM 20343 / BCRC 11652 / CCM 1803 / JCM 6124 / NCDO 523 / NBRC 100496 / NCIMB 8023 / NCTC 12954 / NRRL B-1118 / 37Y).